The primary structure comprises 307 residues: Aspartate carbamoyltransferase catalytic subunit (307 aa).

Carbamoyl phosphate is bound by residues R54 and T55. K83 is a binding site for L-aspartate. Carbamoyl phosphate contacts are provided by R104, H132, and Q135. R165 and R228 together coordinate L-aspartate. Residues L267 and P268 each coordinate carbamoyl phosphate.

It belongs to the aspartate/ornithine carbamoyltransferase superfamily. ATCase family. In terms of assembly, heterododecamer (2C3:3R2) of six catalytic PyrB chains organized as two trimers (C3), and six regulatory PyrI chains organized as three dimers (R2).

It carries out the reaction carbamoyl phosphate + L-aspartate = N-carbamoyl-L-aspartate + phosphate + H(+). The protein operates within pyrimidine metabolism; UMP biosynthesis via de novo pathway; (S)-dihydroorotate from bicarbonate: step 2/3. Functionally, catalyzes the condensation of carbamoyl phosphate and aspartate to form carbamoyl aspartate and inorganic phosphate, the committed step in the de novo pyrimidine nucleotide biosynthesis pathway. The chain is Aspartate carbamoyltransferase catalytic subunit from Clostridium botulinum (strain Loch Maree / Type A3).